Here is a 342-residue protein sequence, read N- to C-terminus: Small ribosomal subunit protein uS2 (342 aa).

The interval 235-283 (EENAPFEQDEPRKPSQKPKQNRPENKPRFDKQAPRAAAKPEVKAEVKPE) is disordered. Basic and acidic residues predominate over residues 255–283 (NRPENKPRFDKQAPRAAAKPEVKAEVKPE).

The protein belongs to the universal ribosomal protein uS2 family.

This Acholeplasma laidlawii (strain PG-8A) protein is Small ribosomal subunit protein uS2.